Here is a 483-residue protein sequence, read N- to C-terminus: Glutamate--tRNA ligase (483 aa).

A 'HIGH' region motif is present at residues 9 to 19; that stretch reads PSPTGFLHIGN. The 'KMSKS' region signature appears at 253–257; that stretch reads KLSKR. Lysine 256 lines the ATP pocket.

The protein belongs to the class-I aminoacyl-tRNA synthetase family. Glutamate--tRNA ligase type 1 subfamily. As to quaternary structure, monomer.

The protein localises to the cytoplasm. It carries out the reaction tRNA(Glu) + L-glutamate + ATP = L-glutamyl-tRNA(Glu) + AMP + diphosphate. In terms of biological role, catalyzes the attachment of glutamate to tRNA(Glu) in a two-step reaction: glutamate is first activated by ATP to form Glu-AMP and then transferred to the acceptor end of tRNA(Glu). This is Glutamate--tRNA ligase from Mycoplasma mycoides subsp. mycoides SC (strain CCUG 32753 / NCTC 10114 / PG1).